The primary structure comprises 441 residues: ATP-dependent protease ATPase subunit HslU (441 aa).

Residues Val18, 60–65 (GVGKTE), Asp253, Glu319, and Arg391 contribute to the ATP site.

The protein belongs to the ClpX chaperone family. HslU subfamily. In terms of assembly, a double ring-shaped homohexamer of HslV is capped on each side by a ring-shaped HslU homohexamer. The assembly of the HslU/HslV complex is dependent on binding of ATP.

It localises to the cytoplasm. Its function is as follows. ATPase subunit of a proteasome-like degradation complex; this subunit has chaperone activity. The binding of ATP and its subsequent hydrolysis by HslU are essential for unfolding of protein substrates subsequently hydrolyzed by HslV. HslU recognizes the N-terminal part of its protein substrates and unfolds these before they are guided to HslV for hydrolysis. The protein is ATP-dependent protease ATPase subunit HslU of Nitratidesulfovibrio vulgaris (strain DP4) (Desulfovibrio vulgaris).